Consider the following 257-residue polypeptide: Deoxyribose-phosphate aldolase (257 aa).

Asp102 serves as the catalytic Proton donor/acceptor. Lys165 acts as the Schiff-base intermediate with acetaldehyde in catalysis. Catalysis depends on Lys199, which acts as the Proton donor/acceptor.

Belongs to the DeoC/FbaB aldolase family. DeoC type 2 subfamily.

The protein localises to the cytoplasm. The catalysed reaction is 2-deoxy-D-ribose 5-phosphate = D-glyceraldehyde 3-phosphate + acetaldehyde. The protein operates within carbohydrate degradation; 2-deoxy-D-ribose 1-phosphate degradation; D-glyceraldehyde 3-phosphate and acetaldehyde from 2-deoxy-alpha-D-ribose 1-phosphate: step 2/2. Catalyzes a reversible aldol reaction between acetaldehyde and D-glyceraldehyde 3-phosphate to generate 2-deoxy-D-ribose 5-phosphate. The sequence is that of Deoxyribose-phosphate aldolase from Photobacterium profundum (strain SS9).